The primary structure comprises 378 residues: Palmitoyltransferase PFA4 (378 aa).

The Cytoplasmic portion of the chain corresponds to 1–9 (MPVKLRWPW). The chain crosses the membrane as a helical span at residues 10-30 (LGIAIPTFLISFIGYGAHYFI). Residues 31–40 (LSNFLSVPKQ) are Lumenal-facing. Residues 41–61 (ITFEFCLSMIWLSYYLAICTN) form a helical membrane-spanning segment. Residues 62-119 (PGRPLPNYKPPPDIWRNFCKKCQSYKPERSHHCKTCNQCVLMMDHHCPWTMNCVGFAN) lie on the Cytoplasmic side of the membrane. The region spanning 78 to 128 (NFCKKCQSYKPERSHHCKTCNQCVLMMDHHCPWTMNCVGFANYPHFLRFLF) is the DHHC domain. The active-site S-palmitoyl cysteine intermediate is cysteine 108. A helical transmembrane segment spans residues 120-140 (YPHFLRFLFWIIVTTSVLFCI). The Lumenal portion of the chain corresponds to 141 to 164 (QAKRIYFIWQQRHLPGYFFKKSEL). Residues 165 to 185 (IFLTISSPLNSFVLLTITILF) form a helical membrane-spanning segment. Over 186 to 378 (LRCLFNQILN…DDFGVDVDME (193 aa)) the chain is Cytoplasmic.

This sequence belongs to the DHHC palmitoyltransferase family. PFA4 subfamily. Autopalmitoylated.

It localises to the endoplasmic reticulum membrane. It catalyses the reaction L-cysteinyl-[protein] + hexadecanoyl-CoA = S-hexadecanoyl-L-cysteinyl-[protein] + CoA. In terms of biological role, mediates the reversible addition of palmitate to target proteins, thereby regulating their membrane association and biological function. Palmitoylates several amino acid permeases. Palmitoylates chitin synthase CHS3, which is required for its proper export from the ER. Can palmitoylate RAS2 in vitro. The chain is Palmitoyltransferase PFA4 from Saccharomyces cerevisiae (strain ATCC 204508 / S288c) (Baker's yeast).